A 211-amino-acid chain; its full sequence is Small ribosomal subunit protein eS1 (211 aa).

Residues 192 to 211 form a disordered region; that stretch reads NGLPPYEAVGDRATPELASY.

The protein belongs to the eukaryotic ribosomal protein eS1 family.

The protein is Small ribosomal subunit protein eS1 of Methanopyrus kandleri (strain AV19 / DSM 6324 / JCM 9639 / NBRC 100938).